The sequence spans 255 residues: Small ribosomal subunit protein eS1 (255 aa).

Residue A2 is modified to N-acetylalanine; partial.

It belongs to the eukaryotic ribosomal protein eS1 family. As to quaternary structure, component of the small ribosomal subunit. Mature ribosomes consist of a small (40S) and a large (60S) subunit. The 40S subunit contains about 33 different proteins and 1 molecule of RNA (18S). The 60S subunit contains about 49 different proteins and 3 molecules of RNA (25S, 5.8S and 5S).

It is found in the cytoplasm. This is Small ribosomal subunit protein eS1 from Vanderwaltozyma polyspora (strain ATCC 22028 / DSM 70294 / BCRC 21397 / CBS 2163 / NBRC 10782 / NRRL Y-8283 / UCD 57-17) (Kluyveromyces polysporus).